The following is a 63-amino-acid chain: Cytochrome c oxidase subunit 7C, mitochondrial (63 aa).

A mitochondrion-targeting transit peptide spans 1 to 16 (MLGHSIRRFTTSVVRR). The Mitochondrial matrix segment spans residues 17-33 (SHYEEGPGKNLPFSVEN). At Lys25 the chain carries N6-acetyllysine; alternate. Lys25 carries the N6-succinyllysine; alternate modification. Residues 34 to 60 (KWTLLVKMCLFFGSAFSVPFLIVRHQL) traverse the membrane as a helical segment. The Mitochondrial intermembrane portion of the chain corresponds to 61–63 (LKQ).

This sequence belongs to the cytochrome c oxidase VIIc family. Component of the cytochrome c oxidase (complex IV, CIV), a multisubunit enzyme composed of 14 subunits. The complex is composed of a catalytic core of 3 subunits MT-CO1, MT-CO2 and MT-CO3, encoded in the mitochondrial DNA, and 11 supernumerary subunits COX4I, COX5A, COX5B, COX6A, COX6B, COX6C, COX7A, COX7B, COX7C, COX8 and NDUFA4, which are encoded in the nuclear genome. The complex exists as a monomer or a dimer and forms supercomplexes (SCs) in the inner mitochondrial membrane with NADH-ubiquinone oxidoreductase (complex I, CI) and ubiquinol-cytochrome c oxidoreductase (cytochrome b-c1 complex, complex III, CIII), resulting in different assemblies (supercomplex SCI(1)III(2)IV(1) and megacomplex MCI(2)III(2)IV(2)). Interacts with RAB5IF.

The protein resides in the mitochondrion inner membrane. It participates in energy metabolism; oxidative phosphorylation. Functionally, component of the cytochrome c oxidase, the last enzyme in the mitochondrial electron transport chain which drives oxidative phosphorylation. The respiratory chain contains 3 multisubunit complexes succinate dehydrogenase (complex II, CII), ubiquinol-cytochrome c oxidoreductase (cytochrome b-c1 complex, complex III, CIII) and cytochrome c oxidase (complex IV, CIV), that cooperate to transfer electrons derived from NADH and succinate to molecular oxygen, creating an electrochemical gradient over the inner membrane that drives transmembrane transport and the ATP synthase. Cytochrome c oxidase is the component of the respiratory chain that catalyzes the reduction of oxygen to water. Electrons originating from reduced cytochrome c in the intermembrane space (IMS) are transferred via the dinuclear copper A center (CU(A)) of subunit 2 and heme A of subunit 1 to the active site in subunit 1, a binuclear center (BNC) formed by heme A3 and copper B (CU(B)). The BNC reduces molecular oxygen to 2 water molecules using 4 electrons from cytochrome c in the IMS and 4 protons from the mitochondrial matrix. In Macaca fascicularis (Crab-eating macaque), this protein is Cytochrome c oxidase subunit 7C, mitochondrial (COX7C).